The chain runs to 368 residues: Probable endopolygalacturonase A (368 aa).

The N-terminal stretch at 1–18 is a signal peptide; that stretch reads MRSVKLFGLAALGSLGAA. The propeptide occupies 19 to 31; the sequence is APAPSRVSDLTKR. A disulfide bond links Cys35 and Cys50. 7 PbH1 repeats span residues 140–162, 167–192, 193–214, 215–235, 244–265, 273–295, and 307–352; these read LEDSTITGLSIKNTPVQAISVQA, LIDITIDNSDGDDNGGHNTDGFDISE, STGVYIRGATVKNQDDCIAINS, GENIEFSGGTCSGGHGLSIGS, VKNVTITDSTVTDSANGVRIKT, VSQVTYSNIKLSGITDYGIVIEQ, and TTGV…DITG. Asp207 acts as the Proton donor in catalysis. A disulfide bridge connects residues Cys209 and Cys225. Residue His229 is part of the active site. Residue Asn246 is glycosylated (N-linked (GlcNAc...) asparagine). 2 disulfide bridges follow: Cys335–Cys340 and Cys359–Cys368.

This sequence belongs to the glycosyl hydrolase 28 family.

It localises to the secreted. It catalyses the reaction (1,4-alpha-D-galacturonosyl)n+m + H2O = (1,4-alpha-D-galacturonosyl)n + (1,4-alpha-D-galacturonosyl)m.. In terms of biological role, involved in maceration and soft-rotting of plant tissue. Hydrolyzes the 1,4-alpha glycosidic bonds of de-esterified pectate in the smooth region of the plant cell wall. This chain is Probable endopolygalacturonase A (pgaA), found in Aspergillus fumigatus (strain CBS 144.89 / FGSC A1163 / CEA10) (Neosartorya fumigata).